The following is a 173-amino-acid chain: RNA pyrophosphohydrolase (173 aa).

The Nudix hydrolase domain maps to 6-149 (GFRANVGIIL…KRSVYRRALQ (144 aa)). Residues 38 to 59 (GGIDRGETPMDAMYRELWEEVG) carry the Nudix box motif.

The protein belongs to the Nudix hydrolase family. RppH subfamily. The cofactor is a divalent metal cation.

Functionally, accelerates the degradation of transcripts by removing pyrophosphate from the 5'-end of triphosphorylated RNA, leading to a more labile monophosphorylated state that can stimulate subsequent ribonuclease cleavage. The protein is RNA pyrophosphohydrolase of Psychrobacter cryohalolentis (strain ATCC BAA-1226 / DSM 17306 / VKM B-2378 / K5).